A 149-amino-acid polypeptide reads, in one-letter code: Aquaporin-like protein 2 (149 aa).

The disordered stretch occupies residues 1-35; it reads MSNESNDLEKNISHLDPTGVDNAYIPPEQPETKHS. The Cytoplasmic segment spans residues 1 to 47; it reads MSNESNDLEKNISHLDPTGVDNAYIPPEQPETKHSRFNIDRGTLRNH. Residues 48–68 traverse the membrane as a helical segment; that stretch reads FIAAVGEFCGTFMFLWCAYVI. Over 69 to 89 the chain is Extracellular; that stretch reads CNVANHDVALTTEPEGSHPGQ. Residues 90-110 form a helical membrane-spanning segment; the sequence is LIMIALGFGFSVMFSIWCFWW. Topologically, residues 111–149 are cytoplasmic; it reads GFEPSRFSLFVFGQSHLTSQMCSDVVSSDHCWDGCWWCR.

It belongs to the MIP/aquaporin (TC 1.A.8) family.

It is found in the endoplasmic reticulum membrane. The protein resides in the cell membrane. Water channel required to facilitate the transport of water across membranes. Involved in freeze tolerance, osmotolerance and cell flocculation in liquid cultures. Is non-functional in most laboratory strains. In Saccharomyces cerevisiae (strain Lalvin EC1118 / Prise de mousse) (Baker's yeast), this protein is Aquaporin-like protein 2 (AQY2-2).